The sequence spans 243 residues: Uridine-cytidine kinase B (243 aa).

An ATP-binding site is contributed by 22–29; it reads GGTASGKT.

It belongs to the uridine kinase family.

The enzyme catalyses uridine + ATP = UMP + ADP + H(+). It catalyses the reaction cytidine + ATP = CMP + ADP + H(+). The protein operates within pyrimidine metabolism; CTP biosynthesis via salvage pathway; CTP from cytidine: step 1/3. Its pathway is pyrimidine metabolism; UMP biosynthesis via salvage pathway; UMP from uridine: step 1/1. Its function is as follows. Catalyzes the conversion of uridine into uridine monophosphate and cytidine into cytidine monophosphate in the pyrimidine salvage pathway. This is Uridine-cytidine kinase B (udkB) from Dictyostelium discoideum (Social amoeba).